Reading from the N-terminus, the 1027-residue chain is LLGL scribble cell polarity complex component 2 (1027 aa).

WD repeat units lie at residues 36-69 (SALG…FMGL), 76-117 (VLQI…EESF), 132-169 (VTEI…DRTI), 193-227 (ALQE…LSHF), 233-268 (LENA…NPEP), 282-324 (AITK…GQQT), 332-366 (VIDF…VIDL), 388-464 (TCSH…YKLS), 508-583 (QKIF…FVLV), and 592-653 (TSLA…LRQS). S653 is modified (phosphoserine). Positions 654–669 (FRRMRRSRVSSHKRRP) are enriched in basic residues. A disordered region spans residues 654-678 (FRRMRRSRVSSHKRRPGGPTGEAQA). 4 WD repeats span residues 715–771 (VRTL…KEIQ), 780–832 (GILV…VSAK), 837–890 (LTAL…VRYS), and 904–927 (VFTK…SLST). The interval 940-981 (TKAKKHNRPSNGNGTGLKMTSSGHVRNSKSQSDGDEKKPGPV) is disordered. Positions 957–970 (KMTSSGHVRNSKSQ) are enriched in polar residues. 2 positions are modified to phosphoserine: S971 and S1022.

This sequence belongs to the WD repeat L(2)GL family. Interacts with GPSM2/LGN, PRKCI/aPKC and PARD6B/Par-6. The complex is enhanced during mitosis. Interacts with DCAF1. Post-translationally, phosphorylated at Ser-653 by PRKCI. Phosphorylation is enhanced during cell polarization induced by calcium. Phosphorylation may occur during the cell-cell contact-induced cell polarization and may contribute to the segregation of LLGL2 from the PRKCI/aPKC and PARD6B/Par-6 complex.

The protein localises to the cytoplasm. In terms of biological role, part of a complex with GPSM2/LGN, PRKCI/aPKC and PARD6B/Par-6, which may ensure the correct organization and orientation of bipolar spindles for normal cell division. This complex plays roles in the initial phase of the establishment of epithelial cell polarity. This chain is LLGL scribble cell polarity complex component 2 (Llgl2), found in Mus musculus (Mouse).